A 70-amino-acid chain; its full sequence is Small ribosomal subunit protein bS18c (70 aa).

Belongs to the bacterial ribosomal protein bS18 family. In terms of assembly, part of the 30S ribosomal subunit.

It localises to the plastid. The protein localises to the chloroplast. The chain is Small ribosomal subunit protein bS18c from Pyropia yezoensis (Susabi-nori).